Consider the following 99-residue polypeptide: HssA/B-like protein 41 (99 aa).

The interval 1–29 (MTLFSSISSISNPMTSSKSSISSFGSGTS) is disordered.

This sequence belongs to the hssA/B family.

The sequence is that of HssA/B-like protein 41 (hssl41) from Dictyostelium discoideum (Social amoeba).